Consider the following 723-residue polypeptide: Nicastrin (723 aa).

The signal sequence occupies residues 1–16 (MKKWLVIVLIIAGIRC). Residues 17–678 (DGFSDQVFRT…ESVNLYLMED (662 aa)) lie on the Extracellular side of the membrane. 6 N-linked (GlcNAc...) asparagine glycosylation sites follow: Asn40, Asn181, Asn271, Asn328, Asn409, and Asn627. The chain crosses the membrane as a helical span at residues 679–699 (ASFEYTMILIAVISALLSIFA). At 700–723 (VGRCSETTFIVDEGEPAAEGGEPL) the chain is on the cytoplasmic side.

The protein belongs to the nicastrin family. As to quaternary structure, component of the gamma-secretase complex, a complex probably composed of the presenilin homodimer (sel-12, hop-1 or spe-4), nicastrin (aph-2), aph-1 and pen-2.

Its subcellular location is the membrane. Essential subunit of the gamma-secretase complex, an endoprotease complex that catalyzes the intramembrane cleavage of integral membrane proteins such as Notch (glp-1 or lin-12). It may represents a stabilizing cofactor required for the assembly of the gamma-secretase complex. The polypeptide is Nicastrin (aph-2) (Caenorhabditis elegans).